We begin with the raw amino-acid sequence, 385 residues long: MEYRDPGHPHFPFTIGIEEEYQIIDPETRELKSYITQILDEGQLILREQMKPEMHQSIVEVGTHVCRTVEEARAEIIRLRGAIGSLAASKGLRIAAAGTHPFSSWQKQDIYPHERYYGVIEEMQEAARRLLIFGMHVHIGMPDNETCIEIMNVARYFLPHLLALSTSSPFWMGRKTGFQSYRSIIFTNFPRTGIPDTFQSYAEFEQYINILLKTHSIDNGKKVWWDARPHPMFGTLEVRICDIATKVDEAIMIAGLVQAIFVKIYSLFRQNQTFRVYSRALINENKWRAARYGMGGKLIDFGRREELSAHDLMAELREFVDDVVDDLGSRAAVDYIDQVLKHGTSAERQLRTYEETGDIKAVVDQLIRETMEGVPLDQATQVVSG.

This sequence belongs to the glutamate--cysteine ligase type 2 family. YbdK subfamily.

The enzyme catalyses L-cysteine + L-glutamate + ATP = gamma-L-glutamyl-L-cysteine + ADP + phosphate + H(+). In terms of biological role, ATP-dependent carboxylate-amine ligase which exhibits weak glutamate--cysteine ligase activity. The sequence is that of Putative glutamate--cysteine ligase 2 from Herpetosiphon aurantiacus (strain ATCC 23779 / DSM 785 / 114-95).